A 233-amino-acid chain; its full sequence is 2-C-methyl-D-erythritol 4-phosphate cytidylyltransferase (233 aa).

The protein belongs to the IspD/TarI cytidylyltransferase family. IspD subfamily.

The catalysed reaction is 2-C-methyl-D-erythritol 4-phosphate + CTP + H(+) = 4-CDP-2-C-methyl-D-erythritol + diphosphate. Its pathway is isoprenoid biosynthesis; isopentenyl diphosphate biosynthesis via DXP pathway; isopentenyl diphosphate from 1-deoxy-D-xylulose 5-phosphate: step 2/6. In terms of biological role, catalyzes the formation of 4-diphosphocytidyl-2-C-methyl-D-erythritol from CTP and 2-C-methyl-D-erythritol 4-phosphate (MEP). The sequence is that of 2-C-methyl-D-erythritol 4-phosphate cytidylyltransferase from Nitrosomonas eutropha (strain DSM 101675 / C91 / Nm57).